Consider the following 1427-residue polypeptide: DNA-directed RNA polymerase subunit beta' (1427 aa).

Cys-66, Cys-68, Cys-81, and Cys-84 together coordinate Zn(2+). Asp-472, Asp-474, and Asp-476 together coordinate Mg(2+). Positions 815, 889, 896, and 899 each coordinate Zn(2+).

This sequence belongs to the RNA polymerase beta' chain family. As to quaternary structure, the RNAP catalytic core consists of 2 alpha, 1 beta, 1 beta' and 1 omega subunit. When a sigma factor is associated with the core the holoenzyme is formed, which can initiate transcription. Mg(2+) serves as cofactor. Requires Zn(2+) as cofactor.

The enzyme catalyses RNA(n) + a ribonucleoside 5'-triphosphate = RNA(n+1) + diphosphate. Its function is as follows. DNA-dependent RNA polymerase catalyzes the transcription of DNA into RNA using the four ribonucleoside triphosphates as substrates. In Bacteroides thetaiotaomicron (strain ATCC 29148 / DSM 2079 / JCM 5827 / CCUG 10774 / NCTC 10582 / VPI-5482 / E50), this protein is DNA-directed RNA polymerase subunit beta'.